The chain runs to 475 residues: 3-isopropylmalate dehydratase large subunit (475 aa).

[4Fe-4S] cluster contacts are provided by cysteine 352, cysteine 413, and cysteine 416.

It belongs to the aconitase/IPM isomerase family. LeuC type 1 subfamily. In terms of assembly, heterodimer of LeuC and LeuD. The cofactor is [4Fe-4S] cluster.

It catalyses the reaction (2R,3S)-3-isopropylmalate = (2S)-2-isopropylmalate. It participates in amino-acid biosynthesis; L-leucine biosynthesis; L-leucine from 3-methyl-2-oxobutanoate: step 2/4. In terms of biological role, catalyzes the isomerization between 2-isopropylmalate and 3-isopropylmalate, via the formation of 2-isopropylmaleate. This is 3-isopropylmalate dehydratase large subunit from Pseudomonas syringae pv. tomato (strain ATCC BAA-871 / DC3000).